Reading from the N-terminus, the 422-residue chain is Solute carrier family 35 member D3 (422 aa).

A run of 10 helical transmembrane segments spans residues valine 9–leucine 29, phenylalanine 38–leucine 58, leucine 64–leucine 84, methionine 103–leucine 123, glycine 131–leucine 151, proline 155–isoleucine 175, leucine 187–alanine 207, alanine 224–leucine 244, phenylalanine 257–valine 277, and threonine 280–alanine 300. Residues alanine 339–glycine 365 are disordered. The segment covering serine 355–arginine 364 has biased composition (polar residues).

Belongs to the TPT transporter family. SLC35D subfamily. In terms of assembly, could interact with ATG14, BECN1 and PIK3C3 that form the PI3KC3-C1/AIC/autophagy initiation complex; enhancing the formation of the AIC and promoting autophagy. As to expression, expressed in brain. Expressed in subsets of dopaminergic neurons. Expressed in maturing megakaryocytes.

Its subcellular location is the cytoplasmic vesicle. It is found in the secretory vesicle. The protein localises to the synaptic vesicle membrane. The protein resides in the early endosome membrane. It localises to the endoplasmic reticulum membrane. The enzyme catalyses UDP-alpha-D-glucose(in) = UDP-alpha-D-glucose(out). Its activity is regulated as follows. Inhibited by proton uncouplers that directly abolish the proton electrochemical gradient. Functionally, probable UDP-glucose transmembrane transporter involved in UDP-glucose transport from the cytosol to the lumen of synaptic vesicles. It is involved in platelet dense granules maturation. Its function is as follows. Alternatively, could function as a molecular adapter enhancing the formation of the PI3KC3-C1/AIC/autophagy initiation complex to promote autophagy in dopaminergic neurons. Could also regulate the plasma membrane localization of the D(1A) dopamine receptor/DRD1 and dopamine signaling. The chain is Solute carrier family 35 member D3 from Mus musculus (Mouse).